The following is a 144-amino-acid chain: Snaclec trimecetin subunit beta (144 aa).

A signal peptide spans M1 to A23. Intrachain disulfides connect C25–C36, C53–C142, and C119–C134. A C-type lectin domain is found at F32–K143.

The protein belongs to the snaclec family. As to quaternary structure, heterodimer of subunits alpha and beta; disulfide-linked. Expressed by the venom gland.

It localises to the secreted. Functionally, snaclec that induces platelet aggregation in either human platelet rich plasma (PRP) or washed platelet suspensions. It causes aggregation in a dose-dependent manner even in the absence of various platelet agonists such as ADP or von Willebrand factor (vWF). Interestingly, it does not induce aggregation in rabbit PRP. A monoclonal antibody against the platelet GPIb receptor blocks the aggregation induced by trimecetin, suggesting that it acts by binding to GPIb (GP1BA/GP1BB). The polypeptide is Snaclec trimecetin subunit beta (Protobothrops mucrosquamatus (Taiwan habu)).